We begin with the raw amino-acid sequence, 380 residues long: Ribosomal RNA large subunit methyltransferase F (380 aa).

Disordered stretches follow at residues 1-54 (MSHK…PRNA) and 260-279 (SQVM…ATDK). Residues 21 to 32 (QRQVVSKSSLQK) are compositionally biased toward low complexity. Over residues 44 to 53 (QKSKALHPRN) the composition is skewed to basic residues. The segment covering 260 to 270 (SQVMSPQVQPS) has biased composition (low complexity).

The protein belongs to the methyltransferase superfamily. METTL16/RlmF family.

The protein resides in the cytoplasm. The enzyme catalyses adenosine(1618) in 23S rRNA + S-adenosyl-L-methionine = N(6)-methyladenosine(1618) in 23S rRNA + S-adenosyl-L-homocysteine + H(+). In terms of biological role, specifically methylates the adenine in position 1618 of 23S rRNA. The protein is Ribosomal RNA large subunit methyltransferase F of Shewanella pealeana (strain ATCC 700345 / ANG-SQ1).